Reading from the N-terminus, the 463-residue chain is Cysteine--tRNA ligase (463 aa).

Zn(2+) is bound at residue Cys-29. The short motif at 31 to 41 (PTVYDFAHIGN) is the 'HIGH' region element. The Zn(2+) site is built by Cys-227, His-252, and Glu-256. The 'KMSKS' region signature appears at 285–289 (KMSKS). Lys-288 is a binding site for ATP.

This sequence belongs to the class-I aminoacyl-tRNA synthetase family. Monomer. Requires Zn(2+) as cofactor.

The protein localises to the cytoplasm. The enzyme catalyses tRNA(Cys) + L-cysteine + ATP = L-cysteinyl-tRNA(Cys) + AMP + diphosphate. This is Cysteine--tRNA ligase from Rhodopseudomonas palustris (strain BisA53).